The primary structure comprises 367 residues: MSNPSLLILPGDGIGPEVMAEVRKIIGWFGDKRGLNFDVSEDLVGGAAYDVHGVPLADETMAKAQEADAVLLGAVGGPKYDDLDFSVKPERGLLRLRKEMDLFSNLRPAQCFDALADFSSLKKDIVAGLDIMIVRELTSGVYFGEPRGIFEEGNERVGINTQRYTESEIERVARSAFELAMRRSKKLCSMEKANVMESGILWREVVTRVAKDYPEVELSHMYADNGAMQLVRAPKQFDVILTDNLFGDILSDCAAMLTGSLGMLPSASLGAPMANGRPKALYEPVHGSAPDIAGQGKANPIACILSFAMALRYSFDQGAEADRLEAAVEQVLADGVRTADLLGTEGVTPVSTTEMGAAILAKLDASL.

77-90 (GPKYDDLDFSVKPE) contacts NAD(+). Substrate is bound by residues Arg97, Arg107, Arg135, and Asp224. Asp224, Asp248, and Asp252 together coordinate Mg(2+). Residue 287 to 299 (GSAPDIAGQGKAN) coordinates NAD(+).

It belongs to the isocitrate and isopropylmalate dehydrogenases family. LeuB type 1 subfamily. In terms of assembly, homodimer. Mg(2+) serves as cofactor. Requires Mn(2+) as cofactor.

It localises to the cytoplasm. The enzyme catalyses (2R,3S)-3-isopropylmalate + NAD(+) = 4-methyl-2-oxopentanoate + CO2 + NADH. It participates in amino-acid biosynthesis; L-leucine biosynthesis; L-leucine from 3-methyl-2-oxobutanoate: step 3/4. In terms of biological role, catalyzes the oxidation of 3-carboxy-2-hydroxy-4-methylpentanoate (3-isopropylmalate) to 3-carboxy-4-methyl-2-oxopentanoate. The product decarboxylates to 4-methyl-2 oxopentanoate. The protein is 3-isopropylmalate dehydrogenase of Ruegeria pomeroyi (strain ATCC 700808 / DSM 15171 / DSS-3) (Silicibacter pomeroyi).